Reading from the N-terminus, the 368-residue chain is MSSLPDDLLLSIFARISRLYYPTLSLVSKSFRSLLASPDLYKARSLLGHTESCLYVCFHFDSGPNTHWFTLCRKPDGTLTNDTSKKKKSNGYVLATVPIPHSPPANFSSLVAVGSDIYNIGGSIYLGPSSSSVSILDSQSHMWREAPSLRVELMSHSASVLDRKIYVAGSYKDGNGDSNSCKNLFEVFDTKTQVWHPEPIPCSKTKGIFYSKSACIDGKFHVETTHGVVYAYKEGRWDKAIPTMFGMRASYSFCEINNVLFYIHRGVFRWYDTKLRMWRILKGLLGLPSLPENMFVRLADYGGKMAVLWEEDRPSCGAGGRDEMMIWCAVIALKRHLNFSFWGKVEWFDHVLTVPKQHVFVKALTASL.

Residues 1–44 (MSSLPDDLLLSIFARISRLYYPTLSLVSKSFRSLLASPDLYKAR) enclose the F-box domain. 3 Kelch repeats span residues 116–163 (DIYN…VLDR), 165–218 (IYVA…CIDG), and 260–304 (LFYI…YGGK).

The sequence is that of F-box/kelch-repeat protein At5g51250 from Arabidopsis thaliana (Mouse-ear cress).